The primary structure comprises 765 residues: Putative ankyrin repeat protein L371 (765 aa).

ANK repeat units lie at residues 60–89, 93–122, 132–161, 165–194, 198–227, 232–261, 265–295, 322–353, and 357–395; these read NGNYMIFFAIIMNSSTILKKLIKYGARLDV, EGNSVMYYPIKFGYYEIIDVLIDYDSKIIG, KGSVPLFYAIKYRNKYALQQLLSKDANANY, DNVNALHMAVLKKDISMVKLVIKHIKNLNA, QGSTALHYACNFQLYDITKLLLDNGADQNI, LDFYPIFYSVIQNDINISKLLVDYGANPNH, EGNTILHYCVIYNHMEIFDYIMNNYVIRCRS, DGLTVVHLMLYDYKEEYDNFLKKLIPYCNLNY, and TGNTILHLIAENNIWNKFDNLLNVKKLNIFIRNNNGKTV.

The polypeptide is Putative ankyrin repeat protein L371 (Acanthamoeba polyphaga mimivirus (APMV)).